The primary structure comprises 594 residues: Probable translation initiation factor IF-2 (594 aa).

In terms of domain architecture, tr-type G spans 11–226 (LRTPIVCVMG…LIGLAQRFLE (216 aa)). The interval 20–27 (GHVDHGKT) is G1. 20–27 (GHVDHGKT) serves as a coordination point for GTP. The G2 stretch occupies residues 45–49 (AITQH). The interval 81–84 (DTPG) is G3. GTP is bound by residues 81 to 85 (DTPGH) and 135 to 138 (NKID). Residues 135–138 (NKID) form a G4 region. The interval 203–205 (SAR) is G5.

This sequence belongs to the TRAFAC class translation factor GTPase superfamily. Classic translation factor GTPase family. IF-2 subfamily.

Its function is as follows. Function in general translation initiation by promoting the binding of the formylmethionine-tRNA to ribosomes. Seems to function along with eIF-2. The polypeptide is Probable translation initiation factor IF-2 (Methanocella arvoryzae (strain DSM 22066 / NBRC 105507 / MRE50)).